The chain runs to 1186 residues: Cytotoxicity-associated immunodominant antigen (1186 aa).

The span at 630-649 (EKEVEKKLESKSGNKNKMEA) shows a compositional bias: basic and acidic residues. The tract at residues 630–652 (EKEVEKKLESKSGNKNKMEAKAQ) is disordered.

In terms of biological role, may be necessary for the transcription, folding, export, or function of the cytotoxin. In Helicobacter pylori (strain ATCC 700392 / 26695) (Campylobacter pylori), this protein is Cytotoxicity-associated immunodominant antigen (cagA).